A 424-amino-acid polypeptide reads, in one-letter code: Enolase (424 aa).

Gln165 is a binding site for (2R)-2-phosphoglycerate. The active-site Proton donor is the Glu207. Residues Asp244, Glu283, and Asp310 each contribute to the Mg(2+) site. Lys335, Arg364, Ser365, and Lys386 together coordinate (2R)-2-phosphoglycerate. The Proton acceptor role is filled by Lys335.

This sequence belongs to the enolase family. It depends on Mg(2+) as a cofactor.

Its subcellular location is the cytoplasm. It localises to the secreted. It is found in the cell surface. It catalyses the reaction (2R)-2-phosphoglycerate = phosphoenolpyruvate + H2O. It participates in carbohydrate degradation; glycolysis; pyruvate from D-glyceraldehyde 3-phosphate: step 4/5. Catalyzes the reversible conversion of 2-phosphoglycerate (2-PG) into phosphoenolpyruvate (PEP). It is essential for the degradation of carbohydrates via glycolysis. This Chlamydia felis (strain Fe/C-56) (Chlamydophila felis) protein is Enolase.